The chain runs to 707 residues: Tubulin polyglutamylase ttll-11 (707 aa).

Residues Arg124–Val488 form the TTL domain. ATP-binding positions include Gln279–Val282, Lys293, and Asp295. Residues Arg675–Leu707 form a disordered region. Over residues Arg677 to Ser696 the composition is skewed to polar residues.

This sequence belongs to the tubulin--tyrosine ligase family. In terms of tissue distribution, expressed in amphid sensory neurons. Weakly expressed in body wall muscles. Isoform a: Specifically expressed in ciliated sensory neurons in the head, including the IL1s, OLQ, head CEP, and amphid neurons. In the male tail, expressed in HOA, RnA, and phasmid neurons. Isoform b: Specifically expressed in male and hermaphrodite IL2 ciliated sensory neurons, and in male-specific CEM, HOB and RnB ciliated sensory neurons.

The protein localises to the cell projection. Its subcellular location is the axon. It is found in the perikaryon. It localises to the dendrite. The protein resides in the cilium. The protein localises to the extracellular vesicle. The catalysed reaction is L-glutamyl-[protein] + L-glutamate + ATP = gamma-L-glutamyl-L-glutamyl-[protein] + ADP + phosphate + H(+). Functionally, polyglutamylase which preferentially modifies tubulin. Involved in the side-chain initiation step of the polyglutamylation reaction. By controlling tubulin glutamylation, regulates ciliary specialization and motor-based transport. Promotes the formation of A and B tubule singlets by splaying microtubule doublets in cilia. Together with ttll-4 and 5, required for male mating. Its function is as follows. Specifically promotes tubulin glutamylation in a subset of ciliated neurons including amphid, phasmid, CEP and RnA neurons. Specifically promotes tubulin glutamylation in male ciliated CEM, HOB and RnB neurons that release bioactive extracellular vesicles. Regulates the localization of TRP channel pdk-2 in male CEM, HOB and RnB neurons. Regulates the environmental release of bioactive extracellular vesicles in cilia. The sequence is that of Tubulin polyglutamylase ttll-11 from Caenorhabditis elegans.